A 236-amino-acid polypeptide reads, in one-letter code: Sugar fermentation stimulation protein homolog (236 aa).

It belongs to the SfsA family.

The protein is Sugar fermentation stimulation protein homolog of Methylobacterium nodulans (strain LMG 21967 / CNCM I-2342 / ORS 2060).